Consider the following 1134-residue polypeptide: Envelopment polyprotein (1134 aa).

An N-terminal signal peptide occupies residues 1–18 (MGIWKWLVMASLVWPVLT). Residues 19-487 (LRNVYDMKIE…GFHGWATAAL (469 aa)) lie on the Lumenal side of the membrane. Cystine bridges form between Cys29–Cys151, Cys63–Cys157, Cys109–Cys128, Cys133–Cys138, Cys175–Cys185, Cys210–Cys247, Cys234–Cys351, and Cys380–Cys389. Asn134 carries an N-linked (GlcNAc...) asparagine; by host glycan. Asn235 and Asn347 each carry an N-linked (GlcNAc...) asparagine; by host glycan. Asn399 carries N-linked (GlcNAc...) asparagine; by host glycosylation. Cystine bridges form between Cys405/Cys424 and Cys452/Cys475. Residues 488–508 (LVTFCFGWVLIPAVTFIILAI) form a helical membrane-spanning segment. The Cytoplasmic segment spans residues 509–627 (LKFIANIFHT…LNLFRYKSRC (119 aa)). The segment at 516 to 533 (FHTSNQENRLKSVLRKIK) is binding to the ribonucleoprotein. CCHC-type zinc fingers lie at residues 545-565 (CDVCKYECETYKELKAHGVSC) and 570-591 (CPYCFTHCEPTEAAFQAHYKVC). Binding to the ribonucleoprotein stretches follow at residues 588 to 605 (YKVCQVTHRFRDDLKKTV), 592 to 603 (QVTHRFRDDLKK), and 611 to 625 (TPGCYRTLNLFRYKS). Positions 611-634 (TPGCYRTLNLFRYKSRCYIFTMWI) constitute an ITAM domain. Residues 615 to 618 (YRTL) carry the YxxL motif. The chain crosses the membrane as a helical span at residues 628–648 (YIFTMWIFLLVLESILWAASA). Residues 649–1104 (SETPLTPVWN…EWISGIFSGN (456 aa)) lie on the Lumenal side of the membrane. 7 cysteine pairs are disulfide-bonded: Cys734–Cys769, Cys738–Cys776, Cys750–Cys884, Cys764–Cys895, Cys779–Cys903, Cys805–Cys814, and Cys822–Cys831. Residues 756–776 (YQYETSWGCNPSDCPGCGTGC) form a fusion loop region. Asn927 is a glycosylation site (N-linked (GlcNAc...) asparagine; by host). Disulfide bonds link Cys969–Cys999, Cys992–Cys1044, Cys1009–Cys1014, Cys1045–Cys1050, and Cys1084–Cys1088. Residues 1105-1125 (WIVLIVLCVFLLFSLVLLSIL) traverse the membrane as a helical segment. The tract at residues 1121–1134 (LLSILCPVRKHKKS) is binding to the ribonucleoprotein. The Cytoplasmic portion of the chain corresponds to 1126–1134 (CPVRKHKKS).

It belongs to the hantavirus envelope glycoprotein family. In terms of assembly, homodimer. Homotetramer; forms heterotetrameric Gn-Gc spikes in the pre-fusion conformation. Interacts (via C-terminus) with the nucleoprotein. Interacts with host TUFM; this interaction contributes to the virus-induced degradation of mitochondria by autophagy, which leads to degradation of host MAVS and inhibition of type I interferon (IFN) responses. Interacts with host MAP1LC3B; this interaction contributes to the virus-induced degradation of mitochondria by autophagy, which leads to degradation of host MAVS and inhibition of type I interferon (IFN) responses. As to quaternary structure, homodimer. Homotetramer; forms heterotetrameric Gn-Gc spikes in the pre-fusion conformation. Homotrimer; forms homotrimer in the post-fusion conformation at acidic pH. Interacts (via C-terminus) with the nucleoprotein. In terms of processing, envelope polyprotein precursor is quickly cleaved in vivo just after synthesis, presumably by host signal peptidase.

The protein resides in the virion membrane. It is found in the host cell surface. Its subcellular location is the host Golgi apparatus membrane. It localises to the host endoplasmic reticulum membrane. The protein localises to the host mitochondrion. Forms homotetramers with glycoprotein C at the surface of the virion. Attaches the virion to host cell receptors including integrin ITGAV/ITGB3. This attachment induces virion internalization predominantly through clathrin-dependent endocytosis. May also bind to host C1QBP for virus entry into the host cell. Mediates the assembly and budding of infectious virus particles through its interaction with the nucleocapsid protein and the viral genome. May dysregulate normal immune and endothelial cell responses through an ITAM motif. Translocates to mitochondria, binds to host TUFM and recruits MAP1LC3B. These interactions induce mitochondrial autophagy and therefore destruction of host MAVS leading to inhibition of type I interferon (IFN) responses. Concomitant breakdown of glycoprotein N is apparently prevented by the nucleoprotein that may inhibit Gn-stimulated autophagosome-lysosome fusion. Interacts with the viral genomic RNA. Its function is as follows. Forms homotetramers with glycoprotein N at the surface of the virion. Attaches the virion to host cell receptors including integrin ITGAV/ITGB3. This attachment induces virion internalization predominantly through clathrin-dependent endocytosis. May also bind to host C1QBP for virus entry into the host cell. Class II fusion protein that promotes fusion of viral membrane with host endosomal membrane after endocytosis of the virion. This Apodemus agrarius (Eurasian field mouse) protein is Envelopment polyprotein (GP).